Consider the following 425-residue polypeptide: UPF0597 protein UNCMA_16400 (425 aa).

This sequence belongs to the UPF0597 family.

This Methanocella arvoryzae (strain DSM 22066 / NBRC 105507 / MRE50) protein is UPF0597 protein UNCMA_16400.